Reading from the N-terminus, the 349-residue chain is Protein-glutamate methylesterase/protein-glutamine glutaminase (349 aa).

One can recognise a Response regulatory domain in the interval 5–122; that stretch reads RVLSVDDSAL…REGMLAYNEM (118 aa). At D56 the chain carries 4-aspartylphosphate. Residues 152 to 344 form the CheB-type methylesterase domain; the sequence is LLSSEKLIAI…QQMLAKISAG (193 aa). Catalysis depends on residues S164, H190, and D286.

Belongs to the CheB family. Interacts with CheA. Binds to a C-terminal pentapeptide sequence carried by certain receptors. In terms of processing, phosphorylated by CheA. Phosphorylation of the N-terminal regulatory domain activates the methylesterase activity.

The protein resides in the cytoplasm. The enzyme catalyses [protein]-L-glutamate 5-O-methyl ester + H2O = L-glutamyl-[protein] + methanol + H(+). It carries out the reaction L-glutaminyl-[protein] + H2O = L-glutamyl-[protein] + NH4(+). Its activity is regulated as follows. Methylesterase activity is activated via phosphorylation in response to negative chemotactic stimuli and is inhibited in the presence of attractants. Activation requires both CheA and CheW. Functionally, involved in chemotaxis. Part of a chemotaxis signal transduction system that modulates chemotaxis in response to various stimuli. Catalyzes the demethylation of specific methylglutamate residues introduced into the chemoreceptors (methyl-accepting chemotaxis proteins or MCP) by CheR. Also mediates the irreversible deamidation of specific glutamine residues to glutamic acid. Catalyzes its own deactivation by removing the activating phosphoryl group. The chain is Protein-glutamate methylesterase/protein-glutamine glutaminase from Escherichia coli (strain K12).